A 401-amino-acid polypeptide reads, in one-letter code: Formate-dependent phosphoribosylglycinamide formyltransferase (401 aa).

Residues 22 to 23 (EL) and glutamate 82 contribute to the N(1)-(5-phospho-beta-D-ribosyl)glycinamide site. Residues arginine 115, lysine 157, 162 to 167 (SSGKGQ), 197 to 200 (EGFI), and glutamate 205 each bind ATP. One can recognise an ATP-grasp domain in the interval 120 to 315 (RLAAETLGLP…EFELHARAIL (196 aa)). 2 residues coordinate Mg(2+): glutamate 274 and glutamate 286. N(1)-(5-phospho-beta-D-ribosyl)glycinamide is bound by residues aspartate 293, lysine 362, and 369–370 (RR).

This sequence belongs to the PurK/PurT family. As to quaternary structure, homodimer.

The catalysed reaction is N(1)-(5-phospho-beta-D-ribosyl)glycinamide + formate + ATP = N(2)-formyl-N(1)-(5-phospho-beta-D-ribosyl)glycinamide + ADP + phosphate + H(+). Its pathway is purine metabolism; IMP biosynthesis via de novo pathway; N(2)-formyl-N(1)-(5-phospho-D-ribosyl)glycinamide from N(1)-(5-phospho-D-ribosyl)glycinamide (formate route): step 1/1. In terms of biological role, involved in the de novo purine biosynthesis. Catalyzes the transfer of formate to 5-phospho-ribosyl-glycinamide (GAR), producing 5-phospho-ribosyl-N-formylglycinamide (FGAR). Formate is provided by PurU via hydrolysis of 10-formyl-tetrahydrofolate. In Cupriavidus pinatubonensis (strain JMP 134 / LMG 1197) (Cupriavidus necator (strain JMP 134)), this protein is Formate-dependent phosphoribosylglycinamide formyltransferase.